Here is a 67-residue protein sequence, read N- to C-terminus: Large ribosomal subunit protein uL29 (67 aa).

The protein belongs to the universal ribosomal protein uL29 family.

This chain is Large ribosomal subunit protein uL29 (rpmC), found in Halalkalibacterium halodurans (strain ATCC BAA-125 / DSM 18197 / FERM 7344 / JCM 9153 / C-125) (Bacillus halodurans).